Here is a 411-residue protein sequence, read N- to C-terminus: Stearoyl-[acyl-carrier-protein] 9-desaturase 2, chloroplastic (411 aa).

A chloroplast-targeting transit peptide spans 1-44 (MALLLNSTITVAMKQNPLVAVSFPRTTCLGSSFSPPRLLRVSCV). Glutamate 148, glutamate 186, histidine 189, glutamate 239, glutamate 272, and histidine 275 together coordinate Fe cation.

The protein belongs to the fatty acid desaturase type 2 family. Homodimer. Fe(2+) is required as a cofactor. As to expression, preferentially expressed in roots and flowers.

The protein localises to the plastid. Its subcellular location is the chloroplast. The catalysed reaction is octadecanoyl-[ACP] + 2 reduced [2Fe-2S]-[ferredoxin] + O2 + 2 H(+) = (9Z)-octadecenoyl-[ACP] + 2 oxidized [2Fe-2S]-[ferredoxin] + 2 H2O. The protein operates within lipid metabolism; fatty acid metabolism. Converts stearoyl-ACP to oleoyl-ACP by introduction of a cis double bond between carbons 9 and 10 of the acyl chain. Exhibits delta-9 palmitoyl-[acyl-carrier-protein] desaturase (PAD) activity. Involved in omega-7 monounsaturated fatty acid biosynthesis, especially in the endosperm oil. The protein is Stearoyl-[acyl-carrier-protein] 9-desaturase 2, chloroplastic (S-ACP-DES2) of Arabidopsis thaliana (Mouse-ear cress).